We begin with the raw amino-acid sequence, 200 residues long: NAD(P)H dehydrogenase (quinone) (200 aa).

A Flavodoxin-like domain is found at 4 to 191; the sequence is VLVLYYSSYG…DIARYQGKRV (188 aa). FMN contacts are provided by residues 10–15 and 79–81; these read SSYGHV and TRF. An NAD(+)-binding site is contributed by Tyr12. Trp99 is a substrate binding site. Residues 114–120 and His135 each bind FMN; that span reads STGTQHG.

It belongs to the WrbA family. FMN serves as cofactor.

It catalyses the reaction a quinone + NADH + H(+) = a quinol + NAD(+). The enzyme catalyses a quinone + NADPH + H(+) = a quinol + NADP(+). This Burkholderia lata (strain ATCC 17760 / DSM 23089 / LMG 22485 / NCIMB 9086 / R18194 / 383) protein is NAD(P)H dehydrogenase (quinone).